Reading from the N-terminus, the 319-residue chain is Aspartate carbamoyltransferase catalytic subunit (319 aa).

Carbamoyl phosphate is bound by residues arginine 54 and threonine 55. Lysine 82 contributes to the L-aspartate binding site. Residues arginine 104, histidine 134, and glutamine 137 each coordinate carbamoyl phosphate. The L-aspartate site is built by arginine 171 and arginine 227. 2 residues coordinate carbamoyl phosphate: glycine 271 and proline 272.

This sequence belongs to the aspartate/ornithine carbamoyltransferase superfamily. ATCase family. Heterododecamer (2C3:3R2) of six catalytic PyrB chains organized as two trimers (C3), and six regulatory PyrI chains organized as three dimers (R2).

It carries out the reaction carbamoyl phosphate + L-aspartate = N-carbamoyl-L-aspartate + phosphate + H(+). It participates in pyrimidine metabolism; UMP biosynthesis via de novo pathway; (S)-dihydroorotate from bicarbonate: step 2/3. Its function is as follows. Catalyzes the condensation of carbamoyl phosphate and aspartate to form carbamoyl aspartate and inorganic phosphate, the committed step in the de novo pyrimidine nucleotide biosynthesis pathway. This chain is Aspartate carbamoyltransferase catalytic subunit, found in Kineococcus radiotolerans (strain ATCC BAA-149 / DSM 14245 / SRS30216).